The following is a 553-amino-acid chain: Solute carrier family 45 member 3 (553 aa).

The next 11 helical transmembrane spans lie at 19 to 39, 52 to 72, 88 to 108, 120 to 140, 161 to 181, 198 to 218, 275 to 295, 323 to 343, 353 to 373, 382 to 402, and 522 to 542; these read LLINLLTFGLEVCLAAGITYV, FMTMVLGIGPVLGLVSVPLLG, FIWALSLGILLSLFLIPRAGW, LELALLILGVGLLDFCGQVCF, YSVYAFMISLGGCLGYLLPAI, CLFGLLTLIFLTCVAATLLVA, FVAELCSWMALMTFTLFYTDF, MGSLGLFLQCAISLVFSLVMD, AVYLASVAAFPVAAGATCLSH, AALTGFTFSALQILPYTLASL, and AYMVSAAGLGLVAIYFATQVV.

This sequence belongs to the glycoside-pentoside-hexuronide (GPH) cation symporter transporter (TC 2.A.2) family.

It localises to the membrane. The catalysed reaction is sucrose(out) + H(+)(out) = sucrose(in) + H(+)(in). Functionally, proton-associated sucrose transporter. May be able to transport also glucose and fructose. The protein is Solute carrier family 45 member 3 (SLC45A3) of Macaca fascicularis (Crab-eating macaque).